Consider the following 202-residue polypeptide: Osteoclast-stimulating factor 1 (202 aa).

In terms of domain architecture, SH3 spans 12-71; it reads GQVKVFRALYTFEPRTPDELYFEEGDIIYISDMSDTNWWKGTCKGRTGLIPSNYVAEQAE. ANK repeat units follow at residues 72–101, 105–135, and 139–168; these read SIDN…GVNG, AGNT…ELNQ, and LGDT…RTDL.

The protein localises to the cytoplasm. Its function is as follows. Induces bone resorption, acting probably through a signaling cascade which results in the secretion of factor(s) enhancing osteoclast formation and activity. The chain is Osteoclast-stimulating factor 1 (OSTF1) from Gallus gallus (Chicken).